The primary structure comprises 67 residues: UPF0434 protein Reut_A0592 (67 aa).

It belongs to the UPF0434 family.

The chain is UPF0434 protein Reut_A0592 from Cupriavidus pinatubonensis (strain JMP 134 / LMG 1197) (Cupriavidus necator (strain JMP 134)).